Reading from the N-terminus, the 223-residue chain is Ion-translocating oxidoreductase complex subunit E (223 aa).

7 helical membrane passes run 17-37 (SLVQ…TINA), 38-58 (IGLG…ISIL), 68-88 (IPIY…LLHA), 91-111 (FNLY…CIVV), 124-144 (VISF…MFVI), 156-176 (FLFG…FTFI), and 181-201 (TIIL…VIAF).

It belongs to the NqrDE/RnfAE family. As to quaternary structure, the complex is composed of six subunits: RnfA, RnfB, RnfC, RnfD, RnfE and RnfG.

Its subcellular location is the cell inner membrane. Part of a membrane-bound complex that couples electron transfer with translocation of ions across the membrane. The chain is Ion-translocating oxidoreductase complex subunit E from Buchnera aphidicola subsp. Schizaphis graminum (strain Sg).